A 419-amino-acid polypeptide reads, in one-letter code: MLSKKLAIDHIPHLIKGKRVLMRVDFNVPIKEGKIKDLTRIQGALPSINYCLENGAESVVLMSHLGRPDGQRVEKHSLKPVLPAIEDLLKKKVQFLDDCVGSEVERECKSASKGKVILLENLRFHLAEEGKGVINGEKVKATKEDIAAFRKSLTSLGELYVNDGFGTAHRAHSSMVGVNVDTRAAGFLLKKELQYFSKILETPERPLTVVMGGAKVADKIQLIMKLLELADELIIGGGMAFTFNKVLDGSNIGKSLFDQEGAKIVPDIIKKAKERGVKIHLPVDAVAADKFEESAATQLVDLKTGAIPDGWMGLDIGPKTIEQNSRVILRAKTVFWNGPQGVFEMAPFSKGSLSMLDDIIKATQTGATSVAGGGDTVSLLGKVKGTTDKFSHVSTGGGASLELLQGKQLPGVVALSDRQ.

(2R)-3-phosphoglycerate is bound by residues V24, D25, F26, N27, R40, S63, H64, G66, R67, L122, R123, H169, and R170. An ADP-binding site is contributed by G213. G213 is a CDP binding site. Residues A214 and K215 each contribute to the AMP site. Residue A214 coordinates ATP. A214 lines the Mg(2+) pocket. A217 and D218 together coordinate Mg(2+). CDP is bound at residue D218. An AMP-binding site is contributed by K219. Residue K219 coordinates ATP. ADP is bound at residue G237. Residue G237 coordinates CDP. Positions 238 and 313 each coordinate AMP. Residues G238 and G313 each contribute to the ATP site. Positions 338 and 343 each coordinate CDP. F343 provides a ligand contact to ADP. E344 lines the AMP pocket. ATP is bound by residues E344, D375, and T376. D375 contacts Mg(2+).

This sequence belongs to the phosphoglycerate kinase family. Monomer. Requires Mg(2+) as cofactor.

It carries out the reaction (2R)-3-phosphoglycerate + ATP = (2R)-3-phospho-glyceroyl phosphate + ADP. It participates in carbohydrate degradation; glycolysis; pyruvate from D-glyceraldehyde 3-phosphate: step 2/5. The sequence is that of Phosphoglycerate kinase (PGK) from Sterkiella nova (Ciliate).